The following is a 456-amino-acid chain: MKIEEVKSTTKTQRIASHSHVKGLGLDESGLAKQAASGLVGQENAREACGVIVELIKSKKMAGRAVLLAGPPGTGKTALALAIAQELGSKVPFCPMVGSEVYSTEIKKTEVLMENFRRAIGLRIKETKEVYEGEVTELTPCETENPMGGYGKTISHVIIGLKTAKGTKQLKLDPSIFESLQKERVEAGDVIYIEANSGAVKRQGRCDTYATEFDLEAEEYVPLPKGDVHKKKEIIQDVTLHDLDVANARPQGGQDILSMMGQLMKPKKTEITDKLRGEINKVVNKYIDQGVAELVPGVLFVDEVHMLDIECFTYLHRALESSIAPIVIFASNRGNCVIRGTEDITSPHGIPLDLLDRVMIIRTMLYTPQEMKQIIKIRAQTEGINISEEALNHLGEIGTKTTLRYSVQLLTPANLLAKINGKDSIEKEHVEEISELFYDAKSSAKILADQQDKYMK.

Residue Lys-2 forms a Glycyl lysine isopeptide (Lys-Gly) (interchain with G-Cter in SUMO2) linkage. 70–77 contributes to the ATP binding site; it reads GPPGTGKT. Lys-225 participates in a covalent cross-link: Glycyl lysine isopeptide (Lys-Gly) (interchain with G-Cter in SUMO1); alternate. Lys-225 is covalently cross-linked (Glycyl lysine isopeptide (Lys-Gly) (interchain with G-Cter in SUMO2); alternate). A Glycyl lysine isopeptide (Lys-Gly) (interchain with G-Cter in SUMO2) cross-link involves residue Lys-445. Lys-453 is subject to N6-acetyllysine.

The protein belongs to the RuvB family. Forms homohexameric rings. Can form a dodecamer with RUVBL2 made of two stacked hexameric rings; however, even though RUVBL1 and RUVBL2 are present in equimolar ratio, the oligomeric status of each hexamer is not known. Oligomerization may regulate binding to nucleic acids and conversely, binding to nucleic acids may affect the dodecameric assembly. Interaction of the complex with DHX34 results in conformational changes of the N-terminus of the RUVBL2 subunits, resulting in loss of nucleotide binding ability and ATP hydrolysis of the complex. Interacts with the transcriptional activation domain of MYC. Component of the RNA polymerase II holoenzyme complex. May also act to bridge the LEF1/TCF1-CTNNB1 complex and TBP. Component of the NuA4 histone acetyltransferase complex which contains the catalytic subunit KAT5/TIP60 and the subunits EP400, TRRAP/PAF400, BRD8/SMAP, EPC1, DMAP1/DNMAP1, RUVBL1/TIP49, RUVBL2, ING3, actin, ACTL6A/BAF53A, MORF4L1/MRG15, MORF4L2/MRGX, MRGBP, YEATS4/GAS41, VPS72/YL1 and MEAF6. The NuA4 complex interacts with MYC and the adenovirus E1A protein. RUVBL1 interacts with EP400. Component of a NuA4-related complex which contains EP400, TRRAP/PAF400, SRCAP, BRD8/SMAP, EPC1, DMAP1/DNMAP1, RUVBL1/TIP49, RUVBL2, actin, ACTL6A/BAF53A, VPS72 and YEATS4/GAS41. Component of the BAF53 complex, at least composed of ACTL6A/BAF53A, RUVBL1/TIP49, SMARCA2/BRM, and TRRAP/PAF400. Component of some MLL1/MLL complex, at least composed of the core components KMT2A/MLL1, ASH2L, HCFC1/HCF1, WDR5 and RBBP5, as well as the facultative components BACC1, CHD8, E2F6, HSP70, INO80C, KANSL1, LAS1L, MAX, MCRS1, MGA, MYST1/MOF, PELP1, PHF20, PRP31, RING2, RUVB1/TIP49A, RUVB2/TIP49B, SENP3, TAF1, TAF4, TAF6, TAF7, TAF9 and TEX10. Associates with alpha and gamma tubulins, particularly during metaphase and early anaphase. Interacts with NPAT. Component of the chromatin-remodeling INO80 complex; specifically part of a complex module associated with the helicase ATP-binding and the helicase C-terminal domain of INO80. Interacts with IGHMBP2. Interacts with OFD1. Interacts with HINT1. Component of a complex with USP49 and PSMC5. Component of a SWR1-like complex. Component of the R2TP complex composed at least of RUVBL1, RUVBL2, RPAP3 and PIHD1. Component of the PAQosome complex which is responsible for the biogenesis of several protein complexes and which consists of R2TP complex members RUVBL1, RUVBL2, RPAP3 and PIH1D1, URI complex members PFDN2, PFDN6, PDRG1, UXT and URI1 as well as ASDURF, POLR2E and DNAAF10/WDR92. Interacts with PIH1D1. Interacts with ITFG1. Interacts with WAC; WAC positively regulates MTOR activity by promoting the assembly of the TTT complex composed of TELO2, TTI1 and TTI2 and the RUVBL complex composed of RUVBL1 and RUVBL2 into the TTT-RUVBL complex which leads to the dimerization of the mTORC1 complex and its subsequent activation. The RUVBL1/RUVBL2 complex interacts with ZNHIT1 (via HIT-type zinc finger), ZNHIT3 (via HIT-type zinc finger), ZNHIT6 (via HIT-type zinc finger) and DDX59/ZNHIT5 (via HIT-type zinc finger) in the presence of ADP. Interacts with NOPCHAP1; the interaction is direct and disrupted upon ATP binding. Interacts with SMG1. Interacts with NOP2, NOP56 and NUFIP1.

Its subcellular location is the nucleus matrix. The protein localises to the nucleus. The protein resides in the nucleoplasm. It is found in the cytoplasm. It localises to the membrane. Its subcellular location is the cytoskeleton. The protein localises to the microtubule organizing center. The protein resides in the centrosome. It is found in the dynein axonemal particle. The catalysed reaction is ATP + H2O = ADP + phosphate + H(+). Functionally, possesses single-stranded DNA-stimulated ATPase and ATP-dependent DNA helicase (3' to 5') activity; hexamerization is thought to be critical for ATP hydrolysis and adjacent subunits in the ring-like structure contribute to the ATPase activity. Component of the NuA4 histone acetyltransferase complex which is involved in transcriptional activation of select genes principally by acetylation of nucleosomal histones H4 and H2A. This modification may both alter nucleosome-DNA interactions and promote interaction of the modified histones with other proteins which positively regulate transcription. This complex may be required for the activation of transcriptional programs associated with oncogene and proto-oncogene mediated growth induction, tumor suppressor mediated growth arrest and replicative senescence, apoptosis, and DNA repair. The NuA4 complex ATPase and helicase activities seem to be, at least in part, contributed by the association of RUVBL1 and RUVBL2 with EP400. NuA4 may also play a direct role in DNA repair when recruited to sites of DNA damage. Component of a SWR1-like complex that specifically mediates the removal of histone H2A.Z/H2AZ1 from the nucleosome. Proposed core component of the chromatin remodeling INO80 complex which exhibits DNA- and nucleosome-activated ATPase activity and catalyzes ATP-dependent nucleosome sliding. Plays an essential role in oncogenic transformation by MYC and also modulates transcriptional activation by the LEF1/TCF1-CTNNB1 complex. Essential for cell proliferation. May be able to bind plasminogen at cell surface and enhance plasminogen activation. The polypeptide is RuvB-like 1 (Ruvbl1) (Mus musculus (Mouse)).